Reading from the N-terminus, the 174-residue chain is Glycine-rich protein 5 (174 aa).

The signal sequence occupies residues 1–22 (MASKSLFLVALLVGSFAFTSFA).

As to expression, mostly expressed in immature seed pods, and, to a lower extent, in stems and leaves. Present in phloem and epiderm in leaves, stems, flowers and fruits.

It is found in the vacuole. In terms of biological role, involved in organ growth by promoting cell elongation processes. This is Glycine-rich protein 5 from Arabidopsis thaliana (Mouse-ear cress).